The primary structure comprises 300 residues: Ribosomal protein L11 methyltransferase (300 aa).

S-adenosyl-L-methionine contacts are provided by threonine 141, glycine 164, aspartate 186, and asparagine 233.

This sequence belongs to the methyltransferase superfamily. PrmA family.

The protein localises to the cytoplasm. The enzyme catalyses L-lysyl-[protein] + 3 S-adenosyl-L-methionine = N(6),N(6),N(6)-trimethyl-L-lysyl-[protein] + 3 S-adenosyl-L-homocysteine + 3 H(+). In terms of biological role, methylates ribosomal protein L11. In Synechocystis sp. (strain ATCC 27184 / PCC 6803 / Kazusa), this protein is Ribosomal protein L11 methyltransferase.